The following is a 141-amino-acid chain: Putative pre-16S rRNA nuclease (141 aa).

Belongs to the YqgF nuclease family.

The protein localises to the cytoplasm. In terms of biological role, could be a nuclease involved in processing of the 5'-end of pre-16S rRNA. The sequence is that of Putative pre-16S rRNA nuclease from Coxiella burnetii (strain RSA 331 / Henzerling II).